Here is a 321-residue protein sequence, read N- to C-terminus: uncharacterized protein (321 aa).

Positions 1–12 (MQGGREVGRESV) are enriched in basic and acidic residues. The interval 1-85 (MQGGREVGRE…GWGEFEGFQE (85 aa)) is disordered. Positions 53–67 (NANSSRLDEGLSSSR) are enriched in polar residues.

This is an uncharacterized protein from Rattus norvegicus (Rat).